A 512-amino-acid polypeptide reads, in one-letter code: FAD-dependent monooxygenase prx3 (512 aa).

Residues 1 to 19 form the signal peptide; the sequence is MLSLKAFLALSLSIHLSQG. Residues 63-235 enclose the FAD-binding PCMH-type domain; that stretch reads CQTTPTCVFA…TRFDLATFSV (173 aa). His-100 bears the Pros-8alpha-FAD histidine mark. Asn-197, Asn-281, Asn-307, Asn-329, Asn-361, and Asn-477 each carry an N-linked (GlcNAc...) asparagine glycan.

Belongs to the oxygen-dependent FAD-linked oxidoreductase family.

Its pathway is sesquiterpene biosynthesis. FAD-dependent monooxygenase; part of the gene cluster that mediates the biosynthesis of PR-toxin, a bicyclic sesquiterpene belonging to the eremophilane class and acting as a mycotoxin. The first step of the pathway is catalyzed by the aristolochene synthase which performs the cyclization of trans,trans-farnesyl diphosphate (FPP) to the bicyclic sesquiterpene aristolochene. Following the formation of aristolochene, the non-oxygenated aristolochene is converted to the trioxygenated intermediate eremofortin B, via 7-epi-neopetasone. This conversion appears to involve three enzymes, a hydroxysterol oxidase-like enzyme, the quinone-oxidase prx3 that forms the quinone-type-structure in the bicyclic nucleus of aristolochene with the C8-oxo group and the C-3 hydroxyl group, and the P450 monooxygenase ORF6 that introduces the epoxide at the double bond between carbons 1 and 2. No monoxy or dioxy-intermediates have been reported to be released to the broth, so these three early oxidative reactions may be coupled together. Eremofortin B is further oxidized by another P450 monooxygenase, that introduces a second epoxide between carbons 7 and 11 prior to acetylation to eremofortin A by the acetyltransferase ORF8. The second epoxidation may be performed by a second P450 monooxygenase. After the acetylation step, eremofortin A is converted to eremofortin C and then to PR-toxin. First the conversion of eremofortin A to eremofortin C proceeds by oxidation of the side chain of the molecule at C-12 and is catalyzed by the short-chain oxidoreductase prx1. The cytochrome P450 monooxygenase ORF6 is probably also involved in this step. The primary alcohol formed at C-12 is finally oxidized by the short-chain alcohol dehydrogenase prx4 that forms PR-toxin. The sequence is that of FAD-dependent monooxygenase prx3 from Penicillium roqueforti (strain FM164).